The chain runs to 391 residues: Nuclear hormone receptor family member nhr-218 (391 aa).

The segment at residues 17-93 (PIPCQICTYQ…MGMKAEKIQQ (77 aa)) is a DNA-binding region (nuclear receptor). 2 consecutive NR C4-type zinc fingers follow at residues 20-40 (CQICTYQSHGVNFNVMTCRAC) and 56-76 (CKTRKNDCRIDSTERHFCRLC). One can recognise an NR LBD domain in the interval 146–391 (SRNYSDSPLT…DNFCNLFAMK (246 aa)).

This sequence belongs to the nuclear hormone receptor family.

Its subcellular location is the nucleus. In terms of biological role, orphan nuclear receptor. This Caenorhabditis elegans protein is Nuclear hormone receptor family member nhr-218 (nhr-218).